The chain runs to 464 residues: tRNA-2-methylthio-N(6)-dimethylallyladenosine synthase (464 aa).

Residues 19–135 enclose the MTTase N-terminal domain; sequence GSYWITTFGC…LENLLERVDS (117 aa). 6 residues coordinate [4Fe-4S] cluster: C28, C64, C98, C170, C174, and C177. The region spanning 156-393 is the Radical SAM core domain; it reads RDSTICGWVN…NELVEATSRK (238 aa). One can recognise a TRAM domain in the interval 396-464; it reads QRYLNNTESV…SFSLSGQIYK (69 aa).

It belongs to the methylthiotransferase family. MiaB subfamily. In terms of assembly, monomer. Requires [4Fe-4S] cluster as cofactor.

It is found in the cytoplasm. It catalyses the reaction N(6)-dimethylallyladenosine(37) in tRNA + (sulfur carrier)-SH + AH2 + 2 S-adenosyl-L-methionine = 2-methylsulfanyl-N(6)-dimethylallyladenosine(37) in tRNA + (sulfur carrier)-H + 5'-deoxyadenosine + L-methionine + A + S-adenosyl-L-homocysteine + 2 H(+). Its function is as follows. Catalyzes the methylthiolation of N6-(dimethylallyl)adenosine (i(6)A), leading to the formation of 2-methylthio-N6-(dimethylallyl)adenosine (ms(2)i(6)A) at position 37 in tRNAs that read codons beginning with uridine. The protein is tRNA-2-methylthio-N(6)-dimethylallyladenosine synthase of Prochlorococcus marinus (strain MIT 9515).